The sequence spans 513 residues: ATP synthase subunit alpha (513 aa).

169 to 176 (GDRQTGKT) lines the ATP pocket.

It belongs to the ATPase alpha/beta chains family. As to quaternary structure, F-type ATPases have 2 components, CF(1) - the catalytic core - and CF(0) - the membrane proton channel. CF(1) has five subunits: alpha(3), beta(3), gamma(1), delta(1), epsilon(1). CF(0) has three main subunits: a(1), b(2) and c(9-12). The alpha and beta chains form an alternating ring which encloses part of the gamma chain. CF(1) is attached to CF(0) by a central stalk formed by the gamma and epsilon chains, while a peripheral stalk is formed by the delta and b chains.

The protein resides in the cell inner membrane. The catalysed reaction is ATP + H2O + 4 H(+)(in) = ADP + phosphate + 5 H(+)(out). In terms of biological role, produces ATP from ADP in the presence of a proton gradient across the membrane. The alpha chain is a regulatory subunit. The sequence is that of ATP synthase subunit alpha from Bordetella bronchiseptica (strain ATCC BAA-588 / NCTC 13252 / RB50) (Alcaligenes bronchisepticus).